Here is a 256-residue protein sequence, read N- to C-terminus: RNA polymerase sigma factor SigI1 (256 aa).

The short motif at 67–80 is the Polymerase core binding element; sequence DEFSIALSAFNEAI. The H-T-H motif DNA-binding region spans 205 to 224; the sequence is RNELKKKAKVHGRTIGNNRK.

It belongs to the sigma-70 factor family. SigI subfamily. As to quaternary structure, interacts with RsgI1.

It is found in the cytoplasm. Negatively regulated by the anti-sigma-I factor RsgI1. Binding of the polysaccharide substrate to RsgI1 may lead to the release and activation of SigI1. Its function is as follows. Sigma factors are initiation factors that promote the attachment of RNA polymerase to specific initiation sites and are then released. This sigma factor is involved in regulation of cellulosomal genes via an external polysaccharide-sensing mechanism. SigI1 promotes transcription from sigI1 and celS promoters. The chain is RNA polymerase sigma factor SigI1 from Acetivibrio thermocellus (strain ATCC 27405 / DSM 1237 / JCM 9322 / NBRC 103400 / NCIMB 10682 / NRRL B-4536 / VPI 7372) (Clostridium thermocellum).